The primary structure comprises 377 residues: Transcription initiation factor IIA subunit 1 (377 aa).

Ala2 is modified (N-acetylalanine). Low complexity-rich tracts occupy residues Gln69 to Gln79, Gln89 to Val105, and Gln248 to Thr280. 2 disordered regions span residues Gln69–Ile107 and Gln248–Phe330. Ser281 and Ser282 each carry phosphoserine; by TAF1. Acidic residues predominate over residues Ser281–Phe330. Residues Ser317 and Ser322 each carry the phosphoserine modification. DNA-binding residues include His344 and Arg345.

This sequence belongs to the TFIIA subunit 1 family. In terms of assembly, TFIIA is a heterodimer of the large unprocessed subunit 1 and a small subunit gamma. It was originally believed to be a heterotrimer of an alpha (p35), a beta (p19) and a gamma subunit (p12). TFIIA forms a complex with TBP. Part of TBP-based Pol II pre-initiation complex (PIC), in which Pol II core assembles with general transcription factors and other specific initiation factors including GTF2E1, GTF2E2, GTF2F1, GTF2F2, TCEA1, ERCC2, ERCC3, GTF2H2, GTF2H3, GTF2H4, GTF2H5, GTF2A1, GTF2A2, GTF2B and TBP; this large multi-subunit PIC complex mediates DNA unwinding and targets Pol II core to the transcription start site where the first phosphodiester bond forms. The alpha and beta subunits are postranslationally produced from the precursor formby TASP1. The cleavage promotes proteasomal degradation.

It is found in the nucleus. Its function is as follows. TFIIA is a component of the transcription machinery of RNA polymerase II and plays an important role in transcriptional activation. TFIIA in a complex with TBP mediates transcriptional activity. This is Transcription initiation factor IIA subunit 1 (Gtf2a1) from Rattus norvegicus (Rat).